Here is an 87-residue protein sequence, read N- to C-terminus: Small ribosomal subunit protein bS20 (87 aa).

The tract at residues 1-25 (MANSAQARKRARQNISHRNRNMSLR) is disordered. Over residues 7 to 20 (ARKRARQNISHRNR) the composition is skewed to basic residues.

This sequence belongs to the bacterial ribosomal protein bS20 family.

Functionally, binds directly to 16S ribosomal RNA. This chain is Small ribosomal subunit protein bS20, found in Nitrosospira multiformis (strain ATCC 25196 / NCIMB 11849 / C 71).